A 72-amino-acid polypeptide reads, in one-letter code: Alpha-elapitoxin-Dpp2c (72 aa).

Disulfide bonds link Cys-3/Cys-21, Cys-14/Cys-42, Cys-27/Cys-31, Cys-46/Cys-57, and Cys-58/Cys-63.

This sequence belongs to the three-finger toxin family. Long-chain subfamily. Type II alpha-neurotoxin sub-subfamily. In terms of tissue distribution, expressed by the venom gland.

The protein localises to the secreted. Functionally, binds with high affinity to muscular (alpha-1/CHRNA1) and neuronal (alpha-7/CHRNA7) nicotinic acetylcholine receptor (nAChR) and inhibits acetylcholine from binding to the receptor, thereby impairing neuromuscular and neuronal transmission. The sequence is that of Alpha-elapitoxin-Dpp2c from Dendroaspis polylepis polylepis (Black mamba).